Here is a 102-residue protein sequence, read N- to C-terminus: Aspartyl/glutamyl-tRNA(Asn/Gln) amidotransferase subunit C (102 aa).

Belongs to the GatC family. Heterotrimer of A, B and C subunits.

The enzyme catalyses L-glutamyl-tRNA(Gln) + L-glutamine + ATP + H2O = L-glutaminyl-tRNA(Gln) + L-glutamate + ADP + phosphate + H(+). The catalysed reaction is L-aspartyl-tRNA(Asn) + L-glutamine + ATP + H2O = L-asparaginyl-tRNA(Asn) + L-glutamate + ADP + phosphate + 2 H(+). Its function is as follows. Allows the formation of correctly charged Asn-tRNA(Asn) or Gln-tRNA(Gln) through the transamidation of misacylated Asp-tRNA(Asn) or Glu-tRNA(Gln) in organisms which lack either or both of asparaginyl-tRNA or glutaminyl-tRNA synthetases. The reaction takes place in the presence of glutamine and ATP through an activated phospho-Asp-tRNA(Asn) or phospho-Glu-tRNA(Gln). This Bordetella avium (strain 197N) protein is Aspartyl/glutamyl-tRNA(Asn/Gln) amidotransferase subunit C.